The primary structure comprises 427 residues: Glutamate-1-semialdehyde 2,1-aminomutase (427 aa).

The residue at position 265 (lysine 265) is an N6-(pyridoxal phosphate)lysine.

Belongs to the class-III pyridoxal-phosphate-dependent aminotransferase family. HemL subfamily. Homodimer. Requires pyridoxal 5'-phosphate as cofactor.

The protein localises to the cytoplasm. It carries out the reaction (S)-4-amino-5-oxopentanoate = 5-aminolevulinate. It functions in the pathway porphyrin-containing compound metabolism; protoporphyrin-IX biosynthesis; 5-aminolevulinate from L-glutamyl-tRNA(Glu): step 2/2. In Teredinibacter turnerae (strain ATCC 39867 / T7901), this protein is Glutamate-1-semialdehyde 2,1-aminomutase.